A 367-amino-acid polypeptide reads, in one-letter code: Anhydro-N-acetylmuramic acid kinase (367 aa).

11–18 is an ATP binding site; that stretch reads GTSLDGVD.

The protein belongs to the anhydro-N-acetylmuramic acid kinase family.

The catalysed reaction is 1,6-anhydro-N-acetyl-beta-muramate + ATP + H2O = N-acetyl-D-muramate 6-phosphate + ADP + H(+). The protein operates within amino-sugar metabolism; 1,6-anhydro-N-acetylmuramate degradation. It functions in the pathway cell wall biogenesis; peptidoglycan recycling. Functionally, catalyzes the specific phosphorylation of 1,6-anhydro-N-acetylmuramic acid (anhMurNAc) with the simultaneous cleavage of the 1,6-anhydro ring, generating MurNAc-6-P. Is required for the utilization of anhMurNAc either imported from the medium or derived from its own cell wall murein, and thus plays a role in cell wall recycling. The protein is Anhydro-N-acetylmuramic acid kinase of Bradyrhizobium diazoefficiens (strain JCM 10833 / BCRC 13528 / IAM 13628 / NBRC 14792 / USDA 110).